The primary structure comprises 96 residues: Protein YdfX (96 aa).

The sequence is that of Protein YdfX (ydfX) from Escherichia coli (strain K12).